The primary structure comprises 428 residues: Sporulation kinase C (428 aa).

2 helical membrane passes run 8-28 (IISI…FYFI) and 36-56 (PVDI…AYYI). The 72-residue stretch at 76-147 (LSEEKNRIMD…NTQIQNKASS (72 aa)) folds into the PAS domain. In terms of domain architecture, PAC spans 148–200 (GMFTAKYVTKNGTIFWGEVHYKLYYDRDDQFTGSLGTMSDITERKEAEDELIE). In terms of domain architecture, Histidine kinase spans 221–426 (GIAHEVRNPL…VFQVVLPLKS (206 aa)). At His224 the chain carries Phosphohistidine; by autocatalysis.

Oligomerizes, probably forms homodimers; oligomerization is assisted by FloT. Interacts with FloT. Another study shows only rare colocalization with FloT or FloA membrane assemblies. KinC membrane assemblies are more mobile than FloT membrane assemblies.

Its subcellular location is the cell membrane. It localises to the membrane raft. It catalyses the reaction ATP + protein L-histidine = ADP + protein N-phospho-L-histidine.. Functionally, phosphorylates the sporulation-regulatory protein Spo0A a transcription factor that also controls biofilm formation. Requires FloT and FloA for localization to DRMs and for activity. The protein is Sporulation kinase C of Bacillus subtilis (strain 168).